The primary structure comprises 147 residues: Peptide methionine sulfoxide reductase MsrA (147 aa).

The active site involves C10.

The protein belongs to the MsrA Met sulfoxide reductase family.

The enzyme catalyses L-methionyl-[protein] + [thioredoxin]-disulfide + H2O = L-methionyl-(S)-S-oxide-[protein] + [thioredoxin]-dithiol. The catalysed reaction is [thioredoxin]-disulfide + L-methionine + H2O = L-methionine (S)-S-oxide + [thioredoxin]-dithiol. In terms of biological role, has an important function as a repair enzyme for proteins that have been inactivated by oxidation. Catalyzes the reversible oxidation-reduction of methionine sulfoxide in proteins to methionine. This Pelagibacter ubique (strain HTCC1062) protein is Peptide methionine sulfoxide reductase MsrA.